Here is a 504-residue protein sequence, read N- to C-terminus: MESLLAAGAGGIGVAAAAVGGFIAAATLAVAPPKNRRNPPPAVPGLPIIGNLHQLKEKKPHQTFTKWAEIYGPIYTIRTGASSVVVLNSTEVAKEAMVAKFSSISTRKLSKALTVLSHDKSMVATSDSGDFHKMGKRYIMLSMLGTSAQKQFRDTRDMIINNMLSTFHQLVKDDPHAPLIFRDVFKDELFRLSMIQSLGEDVSSVYVDEFGRDISKEEIYNATVTDMMMCAIEVDWRDFFPYLSWVPNKSFETRVFTTESRRTAVMRALIKQQKERIVRGEARTCYLDFLLAENTLTDEQLMMLVWEALIEAADTTLVTTEWAMYELAKNPDKQERLYQEIREVCGDEAVTEEHLPWLPYLNAVFQETLRRHSPVPLIPPRFVNEDTMLAGYDVPAGTEMVINLYGCNMNKKEWESPEEWAPERFAGGRFKVADMYKTMAFGAGRRVCAGSLQATHIACAAIARFVQEFGWRLREGDEEKVDTVQLTAYKLHPLHVHLTPRGRM.

The helical transmembrane segment at 3–23 (SLLAAGAGGIGVAAAAVGGFI) threads the bilayer. Cysteine 448 serves as a coordination point for heme.

Belongs to the cytochrome P450 family. Heme serves as cofactor. In terms of tissue distribution, expressed in leaf blades.

It localises to the membrane. Functionally, may hydroxylate diterpenes. This Oryza sativa subsp. japonica (Rice) protein is Ent-kaurene oxidase-like 3.